The chain runs to 160 residues: Cyanate hydratase (160 aa).

Catalysis depends on residues arginine 100, glutamate 103, and serine 126.

It belongs to the cyanase family.

The catalysed reaction is cyanate + hydrogencarbonate + 3 H(+) = NH4(+) + 2 CO2. Functionally, catalyzes the reaction of cyanate with bicarbonate to produce ammonia and carbon dioxide. This Arthroderma otae (strain ATCC MYA-4605 / CBS 113480) (Microsporum canis) protein is Cyanate hydratase.